We begin with the raw amino-acid sequence, 160 residues long: MPHSFGLRARTRYLFSRGFRNHGLLQTTTFLRTFRLGDYVDIKATGNVHKGMPHKFYHGRTGRVWNVTPRAVGVIINKRVGPRIIAKKIHVRTEHVKPSNSMAAHLKRIQENKKAVVEAKKAGKWVDVRRNPAAPKDGFFVNPRNTEFVEVKPVKYELLL.

Belongs to the eukaryotic ribosomal protein eL21 family.

The protein is Large ribosomal subunit protein eL21 (rpl21) of Dictyostelium discoideum (Social amoeba).